Consider the following 254-residue polypeptide: Aspartate/glutamate leucyltransferase (254 aa).

Belongs to the R-transferase family. Bpt subfamily.

Its subcellular location is the cytoplasm. The catalysed reaction is N-terminal L-glutamyl-[protein] + L-leucyl-tRNA(Leu) = N-terminal L-leucyl-L-glutamyl-[protein] + tRNA(Leu) + H(+). It carries out the reaction N-terminal L-aspartyl-[protein] + L-leucyl-tRNA(Leu) = N-terminal L-leucyl-L-aspartyl-[protein] + tRNA(Leu) + H(+). In terms of biological role, functions in the N-end rule pathway of protein degradation where it conjugates Leu from its aminoacyl-tRNA to the N-termini of proteins containing an N-terminal aspartate or glutamate. The protein is Aspartate/glutamate leucyltransferase of Xylella fastidiosa (strain M12).